We begin with the raw amino-acid sequence, 447 residues long: Phosphoglucosamine mutase (447 aa).

Ser-102 serves as the catalytic Phosphoserine intermediate. Mg(2+)-binding residues include Ser-102, Asp-241, Asp-243, and Asp-245. Ser-102 is modified (phosphoserine).

This sequence belongs to the phosphohexose mutase family. It depends on Mg(2+) as a cofactor. In terms of processing, activated by phosphorylation.

The enzyme catalyses alpha-D-glucosamine 1-phosphate = D-glucosamine 6-phosphate. Its function is as follows. Catalyzes the conversion of glucosamine-6-phosphate to glucosamine-1-phosphate. This chain is Phosphoglucosamine mutase, found in Pseudoalteromonas atlantica (strain T6c / ATCC BAA-1087).